Here is a 204-residue protein sequence, read N- to C-terminus: UPF0301 protein Mflv_0850 (204 aa).

This sequence belongs to the UPF0301 (AlgH) family.

This chain is UPF0301 protein Mflv_0850, found in Mycolicibacterium gilvum (strain PYR-GCK) (Mycobacterium gilvum (strain PYR-GCK)).